Consider the following 548-residue polypeptide: Chaperonin GroEL (548 aa).

ATP-binding positions include 30–33 (TLGP), Lys-51, 87–91 (DGTTT), Gly-415, 479–481 (NAA), and Asp-495.

It belongs to the chaperonin (HSP60) family. In terms of assembly, forms a cylinder of 14 subunits composed of two heptameric rings stacked back-to-back. Interacts with the co-chaperonin GroES.

The protein localises to the cytoplasm. It carries out the reaction ATP + H2O + a folded polypeptide = ADP + phosphate + an unfolded polypeptide.. Its function is as follows. Together with its co-chaperonin GroES, plays an essential role in assisting protein folding. The GroEL-GroES system forms a nano-cage that allows encapsulation of the non-native substrate proteins and provides a physical environment optimized to promote and accelerate protein folding. This Salmonella arizonae (strain ATCC BAA-731 / CDC346-86 / RSK2980) protein is Chaperonin GroEL.